The primary structure comprises 615 residues: Dihydroxy-acid dehydratase (615 aa).

D81 is a binding site for Mg(2+). Residue C122 coordinates [2Fe-2S] cluster. Residues D123 and K124 each contribute to the Mg(2+) site. Residue K124 is modified to N6-carboxylysine. C197 serves as a coordination point for [2Fe-2S] cluster. A Mg(2+)-binding site is contributed by E494. The active-site Proton acceptor is the S520.

This sequence belongs to the IlvD/Edd family. In terms of assembly, homodimer. The cofactor is [2Fe-2S] cluster. It depends on Mg(2+) as a cofactor.

It catalyses the reaction (2R)-2,3-dihydroxy-3-methylbutanoate = 3-methyl-2-oxobutanoate + H2O. The enzyme catalyses (2R,3R)-2,3-dihydroxy-3-methylpentanoate = (S)-3-methyl-2-oxopentanoate + H2O. It participates in amino-acid biosynthesis; L-isoleucine biosynthesis; L-isoleucine from 2-oxobutanoate: step 3/4. It functions in the pathway amino-acid biosynthesis; L-valine biosynthesis; L-valine from pyruvate: step 3/4. Functionally, functions in the biosynthesis of branched-chain amino acids. Catalyzes the dehydration of (2R,3R)-2,3-dihydroxy-3-methylpentanoate (2,3-dihydroxy-3-methylvalerate) into 2-oxo-3-methylpentanoate (2-oxo-3-methylvalerate) and of (2R)-2,3-dihydroxy-3-methylbutanoate (2,3-dihydroxyisovalerate) into 2-oxo-3-methylbutanoate (2-oxoisovalerate), the penultimate precursor to L-isoleucine and L-valine, respectively. The polypeptide is Dihydroxy-acid dehydratase (Salinispora arenicola (strain CNS-205)).